We begin with the raw amino-acid sequence, 442 residues long: Cyclin-A1-2 (442 aa).

Composition is skewed to polar residues over residues 1–12 (MSSSSRNLSQEN) and 39–63 (ITNQ…NKIG). The tract at residues 1–72 (MSSSSRNLSQ…GQSKKAPKPA (72 aa)) is disordered.

It belongs to the cyclin family. Cyclin AB subfamily. As to quaternary structure, interacts with CDC20-1, CDC20-2, FZR2/CCS52A1 and FZR1/CCS52A2. Expressed in roots, stems and flowers.

The protein localises to the cytoplasm. The protein resides in the nucleus. Its function is as follows. Involved in the regulation of male meiosis progression. In Arabidopsis thaliana (Mouse-ear cress), this protein is Cyclin-A1-2 (CYCA1-2).